A 475-amino-acid chain; its full sequence is Ribosomal protein uS12 methylthiotransferase RimO (475 aa).

Positions 5-114 (RTVRLIRLGC…IAQRLEDVLA (110 aa)) constitute an MTTase N-terminal domain. The [4Fe-4S] cluster site is built by Cys14, Cys49, Cys78, Cys174, Cys178, and Cys181. The 231-residue stretch at 160 to 390 (LDDSPVAPLK…AGIAEEVTAD (231 aa)) folds into the Radical SAM core domain. One can recognise a TRAM domain in the interval 393–461 (RARLGETVDV…GVDFLAAPVT (69 aa)).

It belongs to the methylthiotransferase family. RimO subfamily. The cofactor is [4Fe-4S] cluster.

Its subcellular location is the cytoplasm. The catalysed reaction is L-aspartate(89)-[ribosomal protein uS12]-hydrogen + (sulfur carrier)-SH + AH2 + 2 S-adenosyl-L-methionine = 3-methylsulfanyl-L-aspartate(89)-[ribosomal protein uS12]-hydrogen + (sulfur carrier)-H + 5'-deoxyadenosine + L-methionine + A + S-adenosyl-L-homocysteine + 2 H(+). In terms of biological role, catalyzes the methylthiolation of an aspartic acid residue of ribosomal protein uS12. This chain is Ribosomal protein uS12 methylthiotransferase RimO, found in Acidothermus cellulolyticus (strain ATCC 43068 / DSM 8971 / 11B).